Reading from the N-terminus, the 403-residue chain is CCA-adding enzyme (403 aa).

ATP contacts are provided by Gly-32 and Arg-35. CTP-binding residues include Gly-32 and Arg-35. Mg(2+)-binding residues include Asp-45 and Asp-47. The ATP site is built by Arg-116, Asp-159, Arg-162, Arg-165, and Arg-168. Residues Arg-116, Asp-159, Arg-162, Arg-165, and Arg-168 each contribute to the CTP site.

Belongs to the tRNA nucleotidyltransferase/poly(A) polymerase family. Bacterial CCA-adding enzyme type 3 subfamily. In terms of assembly, homodimer. Mg(2+) is required as a cofactor.

It catalyses the reaction a tRNA precursor + 2 CTP + ATP = a tRNA with a 3' CCA end + 3 diphosphate. The catalysed reaction is a tRNA with a 3' CCA end + 2 CTP + ATP = a tRNA with a 3' CCACCA end + 3 diphosphate. Its function is as follows. Catalyzes the addition and repair of the essential 3'-terminal CCA sequence in tRNAs without using a nucleic acid template. Adds these three nucleotides in the order of C, C, and A to the tRNA nucleotide-73, using CTP and ATP as substrates and producing inorganic pyrophosphate. tRNA 3'-terminal CCA addition is required both for tRNA processing and repair. Also involved in tRNA surveillance by mediating tandem CCA addition to generate a CCACCA at the 3' terminus of unstable tRNAs. While stable tRNAs receive only 3'-terminal CCA, unstable tRNAs are marked with CCACCA and rapidly degraded. The polypeptide is CCA-adding enzyme (Leuconostoc citreum (strain KM20)).